The primary structure comprises 1079 residues: Spermatogenesis-associated protein 31G1 (1079 aa).

8 disordered regions span residues 97–145 (EVEE…GSEG), 261–281 (EDLEGMAPDPQLLPPPSSPSV), 297–317 (GVLSGAEAPTQSPGTSPLEVL), 331–362 (KMPQAFEPPMPPPCQSPASLSEPRKVSPEGGL), 376–412 (EKPQASESSMPVPCPPLDSLPELQRESSLEDPSRYKP), 506–566 (NLWA…SPPP), 637–678 (VPVF…EQRK), and 840–975 (PHSS…NHPA). Residues 98-113 (VEEEGEEEEEGEDEAS) show a composition bias toward acidic residues. A compositionally biased stretch (pro residues) spans 336–345 (FEPPMPPPCQ). The segment covering 398-412 (LQRESSLEDPSRYKP) has biased composition (basic and acidic residues). Low complexity-rich tracts occupy residues 551–562 (NSSASRSPSLAL) and 645–655 (SSPSSNSVSKS). Residues 669–678 (PDGEAVEQRK) are compositionally biased toward basic and acidic residues. A compositionally biased stretch (basic residues) spans 942–951 (AKKREHPRKP).

Its function is as follows. Dispensable for normal development and fertility. The protein is Spermatogenesis-associated protein 31G1 of Homo sapiens (Human).